The primary structure comprises 121 residues: T cell receptor alpha variable 23/delta variable 6 (121 aa).

Residues 1–21 (MDKILGASFLVLWLQLCWVSG) form the signal peptide. An Ig-like domain is found at 30-121 (QQVKQSPQSL…DSATYFCAAS (92 aa)). Cys-51 and Cys-118 form a disulfide bridge. Residue Asn-95 is glycosylated (N-linked (GlcNAc...) asparagine).

As to quaternary structure, alpha-beta TR is a heterodimer composed of an alpha and beta chain; disulfide-linked. The alpha-beta TR is associated with the transmembrane signaling CD3 coreceptor proteins to form the TR-CD3 (TcR or TCR). The assembly of alpha-beta TR heterodimers with CD3 occurs in the endoplasmic reticulum where a single alpha-beta TR heterodimer associates with one CD3D-CD3E heterodimer, one CD3G-CD3E heterodimer and one CD247 homodimer forming a stable octameric structure. CD3D-CD3E and CD3G-CD3E heterodimers preferentially associate with TR alpha and TR beta chains, respectively. The association of the CD247 homodimer is the last step of TcR assembly in the endoplasmic reticulum and is required for transport to the cell surface.

It is found in the cell membrane. V region of the variable domain of T cell receptor (TR) alpha chain that participates in the antigen recognition. Alpha-beta T cell receptors are antigen specific receptors which are essential to the immune response and are present on the cell surface of T lymphocytes. Recognize peptide-major histocompatibility (MH) (pMH) complexes that are displayed by antigen presenting cells (APC), a prerequisite for efficient T cell adaptive immunity against pathogens. Binding of alpha-beta TR to pMH complex initiates TR-CD3 clustering on the cell surface and intracellular activation of LCK that phosphorylates the ITAM motifs of CD3G, CD3D, CD3E and CD247 enabling the recruitment of ZAP70. In turn ZAP70 phosphorylates LAT, which recruits numerous signaling molecules to form the LAT signalosome. The LAT signalosome propagates signal branching to three major signaling pathways, the calcium, the mitogen-activated protein kinase (MAPK) kinase and the nuclear factor NF-kappa-B (NF-kB) pathways, leading to the mobilization of transcription factors that are critical for gene expression and essential for T cell growth and differentiation. The T cell repertoire is generated in the thymus, by V-(D)-J rearrangement. This repertoire is then shaped by intrathymic selection events to generate a peripheral T cell pool of self-MH restricted, non-autoaggressive T cells. Post-thymic interaction of alpha-beta TR with the pMH complexes shapes TR structural and functional avidity. The protein is T cell receptor alpha variable 23/delta variable 6 of Homo sapiens (Human).